We begin with the raw amino-acid sequence, 426 residues long: Testicular acid phosphatase (426 aa).

The signal sequence occupies residues 1-26; it reads MAGLGFWGHPAGPLLLLLLLVLPPRA. At 27-393 the chain is on the extracellular side; it reads LPEGPLVFVA…AAIPPAPVVP (367 aa). H41 serves as the catalytic Nucleophile. 3 cysteine pairs are disulfide-bonded: C159-C378, C214-C312, and C353-C357. Residues N191 and N269 are each glycosylated (N-linked (GlcNAc...) asparagine). The Proton donor role is filled by D289. 2 N-linked (GlcNAc...) asparagine glycosylation sites follow: N330 and N339. Residues 394-414 traverse the membrane as a helical segment; the sequence is LLAGAVAVLVALSLGLGLLAW. Residues 415–426 are Cytoplasmic-facing; sequence RPGCLRALGGPV.

This sequence belongs to the histidine acid phosphatase family. Homodimer. Post-translationally, glycosylated. Expressed mainly in the testis. Also expressed in the brain where they are enriched at the postsynaptic sites. Expressed at lower levels in the trachea, prostate, bone marrow, spinal cord, colon, fetal brain, heart, thymus, fetal liver, spleen, leukocytes, ovary, small intestine, pancreas and skeletal muscle. Expression is significantly lower in testicular cancer tissues than in normal testicular tissues. Isoform 3 is expressed in the testis, trachea, prostate and bone marrow.

Its subcellular location is the membrane. The catalysed reaction is a phosphate monoester + H2O = an alcohol + phosphate. In terms of biological role, may dephosphorylate receptor tyrosine-protein kinase ERBB4 and inhibits its ligand-induced proteolytic cleavage. May play a role in odontogenesis. The polypeptide is Testicular acid phosphatase (Homo sapiens (Human)).